A 230-amino-acid chain; its full sequence is Ropporin-1-like protein (230 aa).

Residues 17-46 enclose the RIIa domain; that stretch reads PELPDILKQFTKAAIRTQPADVLRWSAGYF.

Belongs to the ropporin family. Component of the axonemal radial spoke complex 1 (RS1), at least composed of spoke head proteins RSPH1, RSPH3, RSPH9 and the cilia-specific component RSPH4A or sperm-specific component RSPH6A, spoke stalk proteins RSPH14, DNAJB13, DYDC1, ROPN1L and NME5, and the anchor protein IQUB. Interacts with FSCB; the interaction increases upon spermatozoa capacitation conditions. May interact with AKAP3. Interacts with CFAP61. In terms of processing, sumoylated, sumoylation decreases upon spermatozoa capacitation conditions.

It localises to the cell projection. It is found in the cilium. The protein resides in the flagellum. Functions as part of axonemal radial spoke complexes that play an important part in the motility of sperm and cilia. Important for male fertility. With ROPN1, involved in fibrous sheath integrity and sperm motility, plays a role in PKA-dependent signaling processes required for spermatozoa capacitation. This is Ropporin-1-like protein (ROPN1L) from Homo sapiens (Human).